We begin with the raw amino-acid sequence, 489 residues long: Glutamyl-tRNA(Gln) amidotransferase subunit A (489 aa).

Residues K77 and S152 each act as charge relay system in the active site. The Acyl-ester intermediate role is filled by S176.

The protein belongs to the amidase family. GatA subfamily. In terms of assembly, heterotrimer of A, B and C subunits.

It catalyses the reaction L-glutamyl-tRNA(Gln) + L-glutamine + ATP + H2O = L-glutaminyl-tRNA(Gln) + L-glutamate + ADP + phosphate + H(+). Its function is as follows. Allows the formation of correctly charged Gln-tRNA(Gln) through the transamidation of misacylated Glu-tRNA(Gln) in organisms which lack glutaminyl-tRNA synthetase. The reaction takes place in the presence of glutamine and ATP through an activated gamma-phospho-Glu-tRNA(Gln). In Protochlamydia amoebophila (strain UWE25), this protein is Glutamyl-tRNA(Gln) amidotransferase subunit A.